The chain runs to 326 residues: Phosphatidylinositol:ceramide inositolphosphotransferase (326 aa).

The next 6 membrane-spanning stretches (helical) occupy residues L33–Y53, S82–H102, V115–L135, V169–V189, R199–S219, and H222–D242. The active site involves H181. Residues H222 and D226 contribute to the active site. Positions M306 to T326 are disordered. Positions H316–T326 are enriched in polar residues.

The protein belongs to the sphingomyelin synthase family.

The protein resides in the golgi apparatus. It localises to the trans-Golgi network membrane. Functionally, catalyzes the transfer of the phosphorylinositol group from phosphatidylinositol (PI) to phytoceramide, an essential step in sphingolipid biosynthesis. May play an important role in modulating plant programmed cell death (PCD) associated with defense (e.g. toward Golovinomyces cichoracearum) by promoting sphingolipid metabolism and regulating ceramide accumulation. This Oryza sativa subsp. indica (Rice) protein is Phosphatidylinositol:ceramide inositolphosphotransferase (ERH1).